We begin with the raw amino-acid sequence, 392 residues long: Nicotinate phosphoribosyltransferase (392 aa).

His216 bears the Phosphohistidine; by autocatalysis mark.

It belongs to the NAPRTase family. Transiently phosphorylated on a His residue during the reaction cycle. Phosphorylation strongly increases the affinity for substrates and increases the rate of nicotinate D-ribonucleotide production. Dephosphorylation regenerates the low-affinity form of the enzyme, leading to product release.

It catalyses the reaction nicotinate + 5-phospho-alpha-D-ribose 1-diphosphate + ATP + H2O = nicotinate beta-D-ribonucleotide + ADP + phosphate + diphosphate. The protein operates within cofactor biosynthesis; NAD(+) biosynthesis; nicotinate D-ribonucleotide from nicotinate: step 1/1. Its function is as follows. Catalyzes the synthesis of beta-nicotinate D-ribonucleotide from nicotinate and 5-phospho-D-ribose 1-phosphate at the expense of ATP. This is Nicotinate phosphoribosyltransferase from Cupriavidus necator (strain ATCC 17699 / DSM 428 / KCTC 22496 / NCIMB 10442 / H16 / Stanier 337) (Ralstonia eutropha).